We begin with the raw amino-acid sequence, 82 residues long: RNA-binding protein Hfq (82 aa).

The Sm domain occupies 11–71; it reads DTFLNSVRKS…ISTIMPAQPV (61 aa).

Belongs to the Hfq family. As to quaternary structure, homohexamer.

RNA chaperone that binds small regulatory RNA (sRNAs) and mRNAs to facilitate mRNA translational regulation in response to envelope stress, environmental stress and changes in metabolite concentrations. Also binds with high specificity to tRNAs. The polypeptide is RNA-binding protein Hfq (Caulobacter vibrioides (strain ATCC 19089 / CIP 103742 / CB 15) (Caulobacter crescentus)).